Reading from the N-terminus, the 67-residue chain is Cysteine-rich venom protein bucarin (67 aa).

The SCP domain occupies 13–58; the sequence is VDKHNALRRSVRPTARNMLQMEWNSNAAQNAKRFADRCTFAHSPPH.

It belongs to the CRISP family. Contains 8 disulfide bonds. Expressed by the venom gland.

The protein resides in the secreted. Blocks contraction of smooth muscle elicited by high potassium-induced depolarization, but does not block caffeine-stimulated contraction. May target voltage-gated calcium channels on smooth muscle. The chain is Cysteine-rich venom protein bucarin from Bungarus candidus (Malayan krait).